The primary structure comprises 615 residues: DNA mismatch repair protein MutL (615 aa).

Residues 363–397 (FAEPAAREPVAPRYTPAPASGSRPAAPWPNAQPGY) form a disordered region. Positions 364 to 391 (AEPAAREPVAPRYTPAPASGSRPAAPWP) are enriched in low complexity.

Belongs to the DNA mismatch repair MutL/HexB family.

Functionally, this protein is involved in the repair of mismatches in DNA. It is required for dam-dependent methyl-directed DNA mismatch repair. May act as a 'molecular matchmaker', a protein that promotes the formation of a stable complex between two or more DNA-binding proteins in an ATP-dependent manner without itself being part of a final effector complex. This is DNA mismatch repair protein MutL from Escherichia coli (strain K12 / MC4100 / BW2952).